The following is a 132-amino-acid chain: Large ribosomal subunit protein bL12 (132 aa).

The segment covering 102-126 has biased composition (basic and acidic residues); it reads APKPIKEATNKDDAESIKKQLEEAG. Positions 102–132 are disordered; it reads APKPIKEATNKDDAESIKKQLEEAGAKASVK.

Belongs to the bacterial ribosomal protein bL12 family. Homodimer. Part of the ribosomal stalk of the 50S ribosomal subunit. Forms a multimeric L10(L12)X complex, where L10 forms an elongated spine to which 2 to 4 L12 dimers bind in a sequential fashion. Binds GTP-bound translation factors.

Forms part of the ribosomal stalk which helps the ribosome interact with GTP-bound translation factors. Is thus essential for accurate translation. The protein is Large ribosomal subunit protein bL12 of Rippkaea orientalis (strain PCC 8801 / RF-1) (Cyanothece sp. (strain PCC 8801)).